A 113-amino-acid polypeptide reads, in one-letter code: uncharacterized protein (113 aa).

This is an uncharacterized protein from Acanthamoeba polyphaga mimivirus (APMV).